The sequence spans 692 residues: Eomesodermin (692 aa).

Residues 35-135 (NSSTPNLPHT…LNTAVPTSAP (101 aa)) are disordered. The segment at residues 263–443 (LWLKFHRHQT…HNPFAKGFRD (181 aa)) is a DNA-binding region (T-box). A required for transcription activation region spans residues 578-692 (SMAGWGSRGS…LGYYSFYSSS (115 aa)). 2 disordered regions span residues 595-614 (TSLP…DLLP) and 621-673 (EMSS…DIGT). Composition is skewed to low complexity over residues 596–609 (SLPW…SGFS) and 654–665 (SPSTSSNENSPP).

Its subcellular location is the nucleus. Functions as a transcriptional activator playing a crucial role during development. Functions in gastrulation, regulating mesoderm differentiation. Activates wnt8, t/bra, chrd and mix-A/mix.1 expression. The polypeptide is Eomesodermin (eomes) (Xenopus laevis (African clawed frog)).